Reading from the N-terminus, the 988-residue chain is Voltage-gated delayed rectifier potassium channel KCNH5 (988 aa).

Residues 1-217 lie on the Cytoplasmic side of the membrane; the sequence is MPGGKRGLVA…LHYCAFKTTW (217 aa). Positions 14–86 constitute a PAS domain; the sequence is TFLENIVRRS…TIEKVRQTFD (73 aa). The PAC domain occupies 91–143; that stretch reads NCFEVLLYKKNRTPVWFYMQIAPIRNEHEKVVLFLCTFKDITLFKQPIEDDST. A helical transmembrane segment spans residues 218–238; it reads DWVILILTFYTAIMVPYNVSF. Residues 239–243 are Extracellular-facing; that stretch reads KTKQN. A helical membrane pass occupies residues 244-264; sequence NIAWLVLDSVVDVIFLVDIVL. Residues 265-291 lie on the Cytoplasmic side of the membrane; that stretch reads NFHTTFVGPGGEVISDPKLIRMNYLKT. A helical membrane pass occupies residues 292–312; it reads WFVIDLLSCLPYDIINAFENV. Over 313-319 the chain is Extracellular; that stretch reads DEGISSL. Residues 320–340 traverse the membrane as a helical; Voltage-sensor segment; that stretch reads FSSLKVVRLLRLGRVARKLDH. Topologically, residues 341–346 are cytoplasmic; the sequence is YLEYGA. Residues 347-367 traverse the membrane as a helical segment; it reads AVLVLLVCVFGLVAHWLACIW. At 368 to 419 the chain is on the extracellular side; it reads YSIGDYEVIDEVTNTIQIDSWLYQLALSIGTPYRYNTSAGIWEGGPSKDSLY. The N-linked (GlcNAc...) asparagine glycan is linked to Asn403. The segment at residues 420–440 is an intramembrane region (pore-forming); sequence VSSLYFTMTSLTTIGFGNIAP. Positions 432 to 437 match the Selectivity filter motif; it reads TIGFGN. The Extracellular portion of the chain corresponds to 441-446; that stretch reads TTDVEK. The helical transmembrane segment at 447–467 threads the bilayer; the sequence is MFSVAMMMVGSLLYATIFGNV. Residues 468 to 988 lie on the Cytoplasmic side of the membrane; that stretch reads TTIFQQMYAN…PESDKDEINF (521 aa). Position 550-668 (550-668) interacts with a nucleoside 3',5'-cyclic phosphate; sequence AFRLASDGCL…SFSRNLTLTC (119 aa). The interval 704-715 is calmodulin-binding; that stretch reads HPVRKLFQKFKQ. The tract at residues 721–741 is disordered; that stretch reads IQGSAQSDPERSQLQVESRPL. Over residues 723–741 the composition is skewed to polar residues; the sequence is GSAQSDPERSQLQVESRPL. Residue Lys785 forms a Glycyl lysine isopeptide (Lys-Gly) (interchain with G-Cter in ubiquitin) linkage. Positions 838 to 893 are disordered; the sequence is GLLSEDPKGSDSENSVTKNPLRKTDSCDSGITKSDLRLDKAGEARSPLEHSPSQAD. Over residues 871–885 the composition is skewed to basic and acidic residues; sequence SDLRLDKAGEARSPL. The residue at position 883 (Ser883) is a Phosphoserine. The CAD (involved in subunit assembly) stretch occupies residues 909 to 948; sequence TLQEVKHELKEDIQLLSCRMTALEKQVAEILKLLSEKSVP.

It belongs to the potassium channel family. H (Eag) (TC 1.A.1.20) subfamily. Kv10.2/KCNH5 sub-subfamily. Homotetramer. The potassium channel is probably composed of a homo- or heterotetrameric complex of pore-forming alpha subunits that can associate with modulating beta subunits. Heteromultimer with KCNH1/EAG.

Its subcellular location is the membrane. The catalysed reaction is K(+)(in) = K(+)(out). Pore-forming (alpha) subunit of a voltage-gated delayed rectifier potassium channel that mediates outward-rectifying potassium currents which, on depolarization, reaches a steady-state level and do not inactivate. The kinetic is characterized by a slow activation time course and a small voltage dependence of the activation time constants, therefore, starts to open at more negative voltages. The activation kinetics depend on the prepulse potential and external divalent cation concentration. The time course of activation is biphasic with a fast and a slowly activating current component. With negative prepulses, the current activation is delayed and slowed down several fold, whereas more positive prepulses speed up activation, therefore the activation rate depends on holding potential. This chain is Voltage-gated delayed rectifier potassium channel KCNH5, found in Mus musculus (Mouse).